A 551-amino-acid polypeptide reads, in one-letter code: Glucans biosynthesis protein D (551 aa).

The segment at residues 1–32 is a signal peptide (tat-type signal); it reads MNRRRFIKGSMAMAAVCGSSGIASLFSQAAFA.

This sequence belongs to the OpgD/OpgG family. In terms of processing, predicted to be exported by the Tat system. The position of the signal peptide cleavage has not been experimentally proven.

The protein resides in the periplasm. The protein operates within glycan metabolism; osmoregulated periplasmic glucan (OPG) biosynthesis. Probably involved in the control of the structural glucose backbone of osmoregulated periplasmic glucans (OPGs). The sequence is that of Glucans biosynthesis protein D from Salmonella paratyphi A (strain ATCC 9150 / SARB42).